A 129-amino-acid polypeptide reads, in one-letter code: Transcriptional activator protein (129 aa).

Positions 1 to 12 (MRSSSPSQPPSI) are enriched in low complexity. The disordered stretch occupies residues 1–23 (MRSSSPSQPPSIKKAHRQAKKRA). Residues 13–23 (KKAHRQAKKRA) show a composition bias toward basic residues. The Nuclear localization signal signature appears at 13 to 28 (KKAHRQAKKRAIRRRR). The segment at 33 to 50 (CGCSIYFHIDCAGHGFTH) is a zinc-finger region. The interval 73 to 117 (LFQDKPSRGHAIHQDQDIQRPNPVQPQPQESIGSPQSIPELPSLD) is disordered. Residues 99–109 (QPQESIGSPQS) are compositionally biased toward polar residues. Positions 115-129 (SLDDIDDSFWVELFS) are transactivation.

Belongs to the geminiviridae transcriptional activator protein family. Monomer. Homodimer. Homooligomer. Self-interaction correlates with nuclear localization and efficient activation of transcription. Monomers suppress local silencing by interacting with and inactivating host adenosine kinase 2 (ADK2) in the cytoplasm. Interacts with and inhibits host SNF1 kinase. Binds to ssDNA. In terms of processing, phosphorylated.

It localises to the host nucleus. It is found in the host cytoplasm. Functionally, strong activator of the late viral genes promoters. Enhances the expression of the capsid protein and nuclear shuttle protein. Acts as a suppressor of RNA-mediated gene silencing, also known as post-transcriptional gene silencing (PTGS), a mechanism of plant viral defense that limits the accumulation of viral RNAs. Suppresses the host RNA silencing by inhibiting adenosine kinase 2 (ADK2), a kinase involved in a general methylation pathway. Also suppresses the host basal defense by interacting with and inhibiting SNF1 kinase, a key regulator of cell metabolism implicated in innate antiviral defense. Determines pathogenicity. This is Transcriptional activator protein from Solanum tuberosum (Potato).